A 325-amino-acid polypeptide reads, in one-letter code: Histone deacetylase 8 (325 aa).

The segment at 1-272 is histone deacetylase; the sequence is MSRVVKPKVA…WTYLTALIVG (272 aa). A substrate-binding site is contributed by aspartate 49. Histidine 91 acts as the Proton acceptor in catalysis. Glycine 99 provides a ligand contact to substrate. A divalent metal cation is bound by residues aspartate 126, histidine 128, and aspartate 215. A substrate-binding site is contributed by tyrosine 254.

Belongs to the histone deacetylase family. HD type 1 subfamily. A divalent metal cation serves as cofactor.

The protein resides in the nucleus. The protein localises to the chromosome. It is found in the cytoplasm. It carries out the reaction N(6)-acetyl-L-lysyl-[histone] + H2O = L-lysyl-[histone] + acetate. The catalysed reaction is N(6)-acetyl-L-lysyl-[protein] + H2O = L-lysyl-[protein] + acetate. It catalyses the reaction N(6)-(2E)-butenoyl-L-lysyl-[protein] + H2O = (2E)-2-butenoate + L-lysyl-[protein]. With respect to regulation, its activity is inhibited by trichostatin A (TSA) and butyrate, 2 well known histone deacetylase inhibitors. In terms of biological role, histone deacetylase that catalyzes the deacetylation of lysine residues on the N-terminal part of the core histones (H2A, H2B, H3 and H4). Histone deacetylation gives a tag for epigenetic repression and plays an important role in transcriptional regulation, cell cycle progression and developmental events. Histone deacetylases act via the formation of large multiprotein complexes. Also involved in the deacetylation of non-histone proteins. In addition to protein deacetylase activity, also has protein-lysine deacylase activity: acts as a protein decrotonylase by mediating decrotonylation ((2E)-butenoyl) of histones. The chain is Histone deacetylase 8 (hdac8) from Xenopus laevis (African clawed frog).